Here is a 924-residue protein sequence, read N- to C-terminus: DNA polymerase (924 aa).

Positions 235–386 constitute a 3'-5' exonuclease domain; it reads YPMSQQPKIV…DDCDVTFRLS (152 aa).

The protein belongs to the DNA polymerase type-A family.

It carries out the reaction DNA(n) + a 2'-deoxyribonucleoside 5'-triphosphate = DNA(n+1) + diphosphate. Its function is as follows. Replicates viral genomic DNA. This polymerase possesses two enzymatic activities: DNA synthesis (polymerase) and an exonucleolytic activity that degrades single-stranded DNA in the 3'-5' direction. This Bacillus phage SP01 (Bacteriophage SP01) protein is DNA polymerase (31).